A 207-amino-acid polypeptide reads, in one-letter code: Large ribosomal subunit protein uL4 (207 aa).

The tract at residues 44-78 (QRQGTHDVKNRSEVRGGGRKPWRQKGTGRARQGSI) is disordered. Basic and acidic residues predominate over residues 47–59 (GTHDVKNRSEVRG). The span at 60–71 (GGRKPWRQKGTG) shows a compositional bias: basic residues.

The protein belongs to the universal ribosomal protein uL4 family. In terms of assembly, part of the 50S ribosomal subunit.

Its function is as follows. One of the primary rRNA binding proteins, this protein initially binds near the 5'-end of the 23S rRNA. It is important during the early stages of 50S assembly. It makes multiple contacts with different domains of the 23S rRNA in the assembled 50S subunit and ribosome. In terms of biological role, forms part of the polypeptide exit tunnel. This chain is Large ribosomal subunit protein uL4, found in Brevibacillus brevis (strain 47 / JCM 6285 / NBRC 100599).